Consider the following 95-residue polypeptide: Protein TusB (95 aa).

The protein belongs to the DsrH/TusB family. In terms of assembly, heterohexamer, formed by a dimer of trimers. The hexameric TusBCD complex contains 2 copies each of TusB, TusC and TusD. The TusBCD complex interacts with TusE.

It localises to the cytoplasm. Its function is as follows. Part of a sulfur-relay system required for 2-thiolation of 5-methylaminomethyl-2-thiouridine (mnm(5)s(2)U) at tRNA wobble positions. The chain is Protein TusB from Buchnera aphidicola subsp. Acyrthosiphon pisum (strain 5A).